The following is an 80-amino-acid chain: Cytochrome c-553 (80 aa).

4 residues coordinate heme c: Cys13, Cys16, His17, and Met58.

In terms of processing, binds 1 heme c group covalently per subunit.

Its subcellular location is the periplasm. In terms of biological role, natural electron acceptor for a formate dehydrogenase. This chain is Cytochrome c-553, found in Desulfomicrobium norvegicum (strain DSM 1741 / NCIMB 8310) (Desulfovibrio baculatus (strain Norway 4)).